The primary structure comprises 752 residues: Zinc finger BED domain-containing protein RICESLEEPER 3 (752 aa).

A BED-type zinc finger spans residues 106–166 (RKKSVVWEHF…ASCPMLKNED (61 aa)). 4 residues coordinate Zn(2+): C129, C132, H153, and C159. The HATC (Hobo-Ac-Tam3) domain stretch occupies residues 647–733 (ELEQYLEEAL…EALFCAKDWL (87 aa)).

In terms of assembly, homodimer.

The protein localises to the nucleus. Its function is as follows. Transposase-like protein that is essential for plant growth and development. May regulate global gene expression by recruiting other cellular factors. This Oryza sativa subsp. japonica (Rice) protein is Zinc finger BED domain-containing protein RICESLEEPER 3.